A 304-amino-acid polypeptide reads, in one-letter code: Calmodulin-lysine N-methyltransferase (304 aa).

The protein belongs to the class I-like SAM-binding methyltransferase superfamily. CLNMT methyltransferase family. Monomer. As to expression, expressed in discreet spatial and tissue-specific patterns including root tips, leaves-tips, floral buds, stamens, hydathodes, stigma, anther, siliques, apical meristems and germinating seeds. Also observed at high levels in the root stele region.

The protein resides in the cytoplasm. It is found in the nucleus. It carries out the reaction [calmodulin]-L-lysine + S-adenosyl-L-methionine = [calmodulin]-N(6)-methyl-L-lysine + S-adenosyl-L-homocysteine + H(+). Catalyzes the trimethylation of calmodulin. Regulates roots development probably by modulating auxin signaling responses. May be involved in gravitropism. Involved in abscisic acid (ABA)-mediated and abiotic stress responses, including salt (NaCl), cold, drought and heat stresses. The polypeptide is Calmodulin-lysine N-methyltransferase (Arabidopsis thaliana (Mouse-ear cress)).